The primary structure comprises 87 residues: UPF0248 protein TON_0940 (87 aa).

This sequence belongs to the UPF0248 family.

This is UPF0248 protein TON_0940 from Thermococcus onnurineus (strain NA1).